The sequence spans 294 residues: Lipoyl synthase (294 aa).

7 residues coordinate [4Fe-4S] cluster: cysteine 35, cysteine 40, cysteine 46, cysteine 61, cysteine 65, cysteine 68, and serine 273. Residues 47–262 enclose the Radical SAM core domain; that stretch reads FRQRQATFLI…REQALSMGFE (216 aa).

This sequence belongs to the radical SAM superfamily. Lipoyl synthase family. The cofactor is [4Fe-4S] cluster.

The protein resides in the cytoplasm. The enzyme catalyses [[Fe-S] cluster scaffold protein carrying a second [4Fe-4S](2+) cluster] + N(6)-octanoyl-L-lysyl-[protein] + 2 oxidized [2Fe-2S]-[ferredoxin] + 2 S-adenosyl-L-methionine + 4 H(+) = [[Fe-S] cluster scaffold protein] + N(6)-[(R)-dihydrolipoyl]-L-lysyl-[protein] + 4 Fe(3+) + 2 hydrogen sulfide + 2 5'-deoxyadenosine + 2 L-methionine + 2 reduced [2Fe-2S]-[ferredoxin]. Its pathway is protein modification; protein lipoylation via endogenous pathway; protein N(6)-(lipoyl)lysine from octanoyl-[acyl-carrier-protein]: step 2/2. Catalyzes the radical-mediated insertion of two sulfur atoms into the C-6 and C-8 positions of the octanoyl moiety bound to the lipoyl domains of lipoate-dependent enzymes, thereby converting the octanoylated domains into lipoylated derivatives. The polypeptide is Lipoyl synthase (Geotalea daltonii (strain DSM 22248 / JCM 15807 / FRC-32) (Geobacter daltonii)).